The following is a 304-amino-acid chain: Protein transport protein sec13 (304 aa).

WD repeat units follow at residues 12 to 51 (GHDD…QRLV), 56 to 97 (GHDG…WQRI), 102 to 143 (LHKA…WEHN), 147 to 203 (AHGL…NGYK), 211 to 253 (GHTD…PGEW), and 259 to 298 (NFDA…EWEN).

It belongs to the WD repeat SEC13 family. In terms of assembly, the COPII coat is composed of at least 5 proteins: the sec23/24 complex, the sec13/31 complex, and the protein vtr-7/sar1. Component of the nuclear pore complex (NPC). NPC constitutes the exclusive means of nucleocytoplasmic transport. NPCs allow the passive diffusion of ions and small molecules and the active, nuclear transport receptor-mediated bidirectional transport of macromolecules such as proteins, RNAs, ribonucleoparticles (RNPs), and ribosomal subunits across the nuclear envelope. Due to its 8-fold rotational symmetry, all subunits are present with 8 copies or multiples thereof.

It is found in the cytoplasmic vesicle. Its subcellular location is the COPII-coated vesicle membrane. The protein localises to the endoplasmic reticulum membrane. The protein resides in the nucleus. It localises to the nuclear pore complex. Its function is as follows. Component of the coat protein complex II (COPII) which promotes the formation of transport vesicles from the endoplasmic reticulum (ER). The coat has two main functions, the physical deformation of the endoplasmic reticulum membrane into vesicles and the selection of cargo molecules. It also functions as a component of the nuclear pore complex (NPC). NPC components, collectively referred to as nucleoporins (NUPs), can play the role of both NPC structural components and of docking or interaction partners for transiently associated nuclear transport factors. Nup-20/sec13 is required for efficient mRNA export from the nucleus to the cytoplasm and for correct nuclear pore biogenesis and distribution. The protein is Protein transport protein sec13 (nup-20) of Neurospora crassa (strain ATCC 24698 / 74-OR23-1A / CBS 708.71 / DSM 1257 / FGSC 987).